A 1155-amino-acid chain; its full sequence is Probable translation initiation factor IF-2 (1155 aa).

Residues 237–367 (FAGVMFGDGC…LSILLLRFEI (131 aa)) enclose the DOD-type homing endonuclease domain. The tr-type G domain occupies 561 to 781 (TTETHNFIAN…VAGLAQKFLE (221 aa)). GTP is bound by residues 634 to 638 (DTPGH) and 688 to 691 (NKID).

It belongs to the TRAFAC class translation factor GTPase superfamily. Classic translation factor GTPase family. IF-2 subfamily. Post-translationally, this protein undergoes a protein self splicing that involves a post-translational excision of the intervening region (intein) followed by peptide ligation.

Functionally, function in general translation initiation by promoting the binding of the formylmethionine-tRNA to ribosomes. Seems to function along with eIF-2. This Methanocaldococcus jannaschii (strain ATCC 43067 / DSM 2661 / JAL-1 / JCM 10045 / NBRC 100440) (Methanococcus jannaschii) protein is Probable translation initiation factor IF-2 (infB).